A 573-amino-acid chain; its full sequence is Urease subunit alpha (573 aa).

Residues 136 to 573 form the Urease domain; sequence GGIDCHVHFI…LPMAQRYFLF (438 aa). 3 residues coordinate Ni(2+): His141, His143, and Lys224. An N6-carboxylysine modification is found at Lys224. Substrate is bound at residue His226. 2 residues coordinate Ni(2+): His253 and His279. Residue His327 is the Proton donor of the active site. Residue Asp367 coordinates Ni(2+).

It belongs to the metallo-dependent hydrolases superfamily. Urease alpha subunit family. Heterotrimer of UreA (gamma), UreB (beta) and UreC (alpha) subunits. Three heterotrimers associate to form the active enzyme. Requires Ni cation as cofactor. In terms of processing, carboxylation allows a single lysine to coordinate two nickel ions.

The protein resides in the cytoplasm. It catalyses the reaction urea + 2 H2O + H(+) = hydrogencarbonate + 2 NH4(+). Its pathway is nitrogen metabolism; urea degradation; CO(2) and NH(3) from urea (urease route): step 1/1. The protein is Urease subunit alpha of Rhodococcus opacus (strain B4).